A 446-amino-acid chain; its full sequence is NADH-ubiquinone oxidoreductase chain 4 (446 aa).

A run of 13 helical transmembrane segments spans residues 4–24, 56–76, 93–113, 114–134, 139–159, 182–202, 218–238, 245–265, 272–292, 297–317, 330–350, 373–393, and 426–446; these read IIFFLLFLIPFCFINNMYWMV, MLSYGLILLSLWICSLMLLAS, IIILLLLLILTFSSMSLFMFY, LFFESSLIPTLFLILGWGYQP, AGLYLLFYTLLVSLPMLIGIF, LLYFCLLCAFLVKMPMFLVHL, ILAGIMLKLGGYGMLRVISFL, YSFVWISISLVGGVLVSLVCL, ALIAYSSVAHMGIVLSGLLTM, LCGSYTLMIAHGLCSSGLFCL, MLINKGLLNFMPSMTLWWFLL, IVSWSWISMILLSFLSFFSAA, and LLHWLPLNLLILKSESFMLWL.

It belongs to the complex I subunit 4 family.

The protein resides in the mitochondrion membrane. It catalyses the reaction a ubiquinone + NADH + 5 H(+)(in) = a ubiquinol + NAD(+) + 4 H(+)(out). Core subunit of the mitochondrial membrane respiratory chain NADH dehydrogenase (Complex I) that is believed to belong to the minimal assembly required for catalysis. Complex I functions in the transfer of electrons from NADH to the respiratory chain. The immediate electron acceptor for the enzyme is believed to be ubiquinone. In Drosophila melanogaster (Fruit fly), this protein is NADH-ubiquinone oxidoreductase chain 4 (mt:ND4).